Reading from the N-terminus, the 490-residue chain is Glutamate--tRNA ligase (490 aa).

The 'HIGH' region motif lies at 13–23 (PSPTGTPHVGL). Residues 257–261 (KLSKR) carry the 'KMSKS' region motif. K260 provides a ligand contact to ATP.

Belongs to the class-I aminoacyl-tRNA synthetase family. Glutamate--tRNA ligase type 1 subfamily. In terms of assembly, monomer.

The protein localises to the cytoplasm. The enzyme catalyses tRNA(Glu) + L-glutamate + ATP = L-glutamyl-tRNA(Glu) + AMP + diphosphate. In terms of biological role, catalyzes the attachment of glutamate to tRNA(Glu) in a two-step reaction: glutamate is first activated by ATP to form Glu-AMP and then transferred to the acceptor end of tRNA(Glu). This is Glutamate--tRNA ligase from Mycobacterium bovis (strain BCG / Pasteur 1173P2).